The primary structure comprises 888 residues: DNA mismatch repair protein MutS (888 aa).

Residues 249–271 (IGQRPPLSPPSREASGSTMAIDP) are disordered. 638-645 (GPNMAGKS) serves as a coordination point for ATP.

It belongs to the DNA mismatch repair MutS family.

Its function is as follows. This protein is involved in the repair of mismatches in DNA. It is possible that it carries out the mismatch recognition step. This protein has a weak ATPase activity. The sequence is that of DNA mismatch repair protein MutS from Nitrobacter winogradskyi (strain ATCC 25391 / DSM 10237 / CIP 104748 / NCIMB 11846 / Nb-255).